The following is a 644-amino-acid chain: DNA mismatch repair protein MutL (644 aa).

Over residues 340–360 (KKEKDESVQEQFKFEHTKPRE) the composition is skewed to basic and acidic residues. Positions 340–425 (KKEKDESVQE…ETVREEKEWT (86 aa)) are disordered. The segment covering 387–400 (QLWQPPKQEWQPPQ) has biased composition (low complexity). Residues 416–425 (ETVREEKEWT) are compositionally biased toward basic and acidic residues.

It belongs to the DNA mismatch repair MutL/HexB family.

This protein is involved in the repair of mismatches in DNA. It is required for dam-dependent methyl-directed DNA mismatch repair. May act as a 'molecular matchmaker', a protein that promotes the formation of a stable complex between two or more DNA-binding proteins in an ATP-dependent manner without itself being part of a final effector complex. The sequence is that of DNA mismatch repair protein MutL from Bacillus mycoides (strain KBAB4) (Bacillus weihenstephanensis).